The primary structure comprises 398 residues: Methionine aminopeptidase 1A (398 aa).

N-acetylalanine is present on Ala2. A C6H2-type zinc finger spans residues 12–65; the sequence is TLSCARCEKPAHLQCPKCIDLKLPREQASFCTQECFKAAWSSHKSVHVKAQLSS. Zn(2+) is bound by residues Cys15, Cys18, Cys26, Cys29, Cys42, Cys46, His54, and His58. Residue His214 participates in a protein binding. Zn(2+) contacts are provided by Asp231, Asp242, and His305. His312 contacts a protein. Glu338 and Glu369 together coordinate Zn(2+).

Belongs to the peptidase M24A family. Methionine aminopeptidase type 1 subfamily. In terms of assembly, associates with the 60S ribosomal subunit of the 80S translational complex. Zn(2+) is required as a cofactor. The cofactor is Co(2+). Requires Mn(2+) as cofactor. It depends on Fe(2+) as a cofactor. As to expression, ubiquitous.

The protein localises to the cytoplasm. The enzyme catalyses Release of N-terminal amino acids, preferentially methionine, from peptides and arylamides.. Functionally, cotranslationally removes the N-terminal methionine from nascent proteins. The N-terminal methionine is often cleaved when the second residue in the primary sequence is small and uncharged (Met-Ala-, Cys, Gly, Pro, Ser, Thr, or Val). The sequence is that of Methionine aminopeptidase 1A (MAP1A) from Arabidopsis thaliana (Mouse-ear cress).